We begin with the raw amino-acid sequence, 98 residues long: Feather beta keratin (98 aa).

Ser-2 is subject to N-acetylserine.

The protein belongs to the avian keratin family. As to quaternary structure, the avian keratins (F-ker, S-ker, C-ker and B-ker) are a complex mixture of very similar polypeptides.

The protein is Feather beta keratin of Mycteria americana (Wood stork).